The chain runs to 174 residues: Protein-lysine myristoyltransferase HlyC (174 aa).

Active-site residues include His23 and Asp92. Residue His151 participates in heme binding.

The protein belongs to the RTX toxin acyltransferase family. Monomer. Proteolytically cleaved by the protease systems ClpAP, ClpXP and FtsH, leading to its degradation.

Its subcellular location is the cytoplasm. The enzyme catalyses tetradecanoyl-[ACP] + L-lysyl-[protein] = N(6)-tetradecanoyl-L-lysyl-[protein] + holo-[ACP] + H(+). Its activity is regulated as follows. The acyltransferase activity is inhibited by heme. Protein-lysine myristoyltransferase that catalyzes myristoylation of the protoxin (HlyA) at two internal lysine residues, thereby converting it to the active toxin. The polypeptide is Protein-lysine myristoyltransferase HlyC (Escherichia coli).